Here is a 523-residue protein sequence, read N- to C-terminus: NADH-ubiquinone oxidoreductase chain 2 (523 aa).

14 helical membrane passes run 3–23 (LFGV…IPAI), 30–50 (IILL…NNIG), 62–82 (VTTI…LVLL), 110–130 (SVLA…SSLI), 135–155 (LISM…LATI), 170–190 (FLLG…LYSF), 212–232 (IEIS…AAPF), 246–266 (VVTT…ILEF), 281–301 (LLLI…LAQY), 306–326 (LLTY…AINN), 333–353 (FLFY…ILVA), 386–406 (GLSL…VGFF), 419–439 (GNFF…AYYL), and 490–510 (LVIA…TPLL).

Belongs to the complex I subunit 2 family.

The protein resides in the mitochondrion inner membrane. It carries out the reaction a ubiquinone + NADH + 5 H(+)(in) = a ubiquinol + NAD(+) + 4 H(+)(out). Its function is as follows. Core subunit of the mitochondrial membrane respiratory chain NADH dehydrogenase (Complex I) that is believed to belong to the minimal assembly required for catalysis. Complex I functions in the transfer of electrons from NADH to the respiratory chain. The immediate electron acceptor for the enzyme is believed to be ubiquinone. The chain is NADH-ubiquinone oxidoreductase chain 2 from Rhizopus oryzae (Mucormycosis agent).